We begin with the raw amino-acid sequence, 140 residues long: Small ribosomal subunit protein uS12 (140 aa).

Disordered regions lie at residues 1 to 20 and 35 to 55; these read MPTI…VKSD and QTNV…TMTP. The residue at position 102 (Asp-102) is a 3-methylthioaspartic acid. A disordered region spans residues 121–140; it reads DGRMQGRSKYGTKRPKAAKK. The span at 130–140 shows a compositional bias: basic residues; that stretch reads YGTKRPKAAKK.

The protein belongs to the universal ribosomal protein uS12 family. Part of the 30S ribosomal subunit. Contacts proteins S8 and S17. May interact with IF1 in the 30S initiation complex.

In terms of biological role, with S4 and S5 plays an important role in translational accuracy. Its function is as follows. Interacts with and stabilizes bases of the 16S rRNA that are involved in tRNA selection in the A site and with the mRNA backbone. Located at the interface of the 30S and 50S subunits, it traverses the body of the 30S subunit contacting proteins on the other side and probably holding the rRNA structure together. The combined cluster of proteins S8, S12 and S17 appears to hold together the shoulder and platform of the 30S subunit. This Exiguobacterium sp. (strain ATCC BAA-1283 / AT1b) protein is Small ribosomal subunit protein uS12.